Reading from the N-terminus, the 221-residue chain is NEDD8 ultimate buster 1 (221 aa).

UBA domains are found at residues 1-19 (LGLR…HIAN), 30-76 (EERE…LLHN), and 95-135 (SPSQ…LVHN). Residues 136–193 (GGRLPPDLQLSAEDSSSTPSTSPSDSAGTSSASTDEDMETEAVNEILEDIPEHEEDYL) are disordered. Residues 146-168 (SAEDSSSTPSTSPSDSAGTSSAS) are compositionally biased toward low complexity. Over residues 169 to 193 (TDEDMETEAVNEILEDIPEHEEDYL) the composition is skewed to acidic residues.

As to quaternary structure, directly interacts with NEDD8 and PSMD4/S5a, a member of the regulatory subunit of the 26S proteasome. Interacts with AIPL1.

The protein resides in the nucleus. Its function is as follows. Specific down-regulator of the NEDD8 conjugation system. Recruits NEDD8 and its conjugates to the proteasome for degradation. The protein is NEDD8 ultimate buster 1 (NUB1) of Bos taurus (Bovine).